Here is a 711-residue protein sequence, read N- to C-terminus: Nucleolin (711 aa).

Residues 1–304 (MVKLAKAGKN…KKQKVEGTEP (304 aa)) are disordered. N6-acetyllysine occurs at positions 9, 15, and 16. Residues 24-43 (VEEDSEDEEMSEDEEDDSSG) show a composition bias toward acidic residues. Phosphoserine occurs at positions 28, 34, 41, and 42. A compositionally biased stretch (low complexity) spans 56–107 (AAATSAKKVVVSPTKKVAVATPAKKAAVTPGKKAAATPAKKTVTPAKAVATP). The stretch at 58–65 (ATSAKKVV) is repeat 1. The 8 X 8 AA tandem repeats of X-T-P-X-K-K-X-X stretch occupies residues 58–135 (ATSAKKVVVS…GAAIPAKGAK (78 aa)). Serine 67 carries the post-translational modification Phosphoserine. Phosphothreonine is present on residues threonine 69, threonine 76, threonine 84, and threonine 92. 3 consecutive repeat copies span residues 75 to 82 (ATPAKKAA), 83 to 90 (VTPGKKAA), and 91 to 98 (ATPAKKTV). The residue at position 96 (lysine 96) is an N6-acetyllysine. Position 99 is a phosphothreonine (threonine 99). The stretch at 99–104 (TPAKAV) is one 5; truncated repeat. Lysine 102 carries the N6-acetyllysine modification. Copy 6 of the repeat occupies 105–112 (ATPGKKGA). Threonine 106 bears the Phosphothreonine mark. Lysine 109 is modified (N6-acetyllysine). The residue at position 113 (threonine 113) is a Phosphothreonine. Lysine 116 carries the post-translational modification N6-acetyllysine. 2 repeat units span residues 120–127 (ATPGKKGA) and 128–135 (AIPAKGAK). Residue threonine 121 is modified to Phosphothreonine. The segment covering 122 to 137 (PGKKGAAIPAKGAKNG) has biased composition (low complexity). Lysine 124 is modified (N6-acetyllysine). Serine 145, serine 153, serine 184, and serine 207 each carry phosphoserine. 2 stretches are compositionally biased toward acidic residues: residues 145–171 (SDEE…DEIE) and 184–212 (SEDE…EEAM). Threonine 215 is modified (phosphothreonine). Residues 235–273 (EDEDEEEDDEDEDDDDDEDDEDEDDDDEDEEEEEEEEEP) show a composition bias toward acidic residues. The span at 274–301 (VKEAPGKRKKEMAKQKAAPEAKKQKVEG) shows a compositional bias: basic and acidic residues. Lysine 298 is covalently cross-linked (Glycyl lysine isopeptide (Lys-Gly) (interchain with G-Cter in SUMO1); alternate). Residue lysine 298 forms a Glycyl lysine isopeptide (Lys-Gly) (interchain with G-Cter in SUMO2); alternate linkage. A Phosphothreonine modification is found at threonine 302. 2 consecutive RRM domains span residues 308–384 (FNLF…KPKG) and 394–467 (RTLL…YTGE). The residue at position 319 (lysine 319) is an N6-acetyllysine. Lysine 325 is covalently cross-linked (Glycyl lysine isopeptide (Lys-Gly) (interchain with G-Cter in SUMO1); alternate). Lysine 325 is covalently cross-linked (Glycyl lysine isopeptide (Lys-Gly) (interchain with G-Cter in SUMO2); alternate). Position 349 is an N6-acetyllysine (lysine 349). Serine 357 is modified (phosphoserine). At threonine 368 the chain carries Phosphothreonine. Lysine 371 participates in a covalent cross-link: Glycyl lysine isopeptide (Lys-Gly) (interchain with G-Cter in SUMO2). Lysine 378 is covalently cross-linked (Glycyl lysine isopeptide (Lys-Gly) (interchain with G-Cter in SUMO2); alternate). N6-acetyllysine; alternate is present on lysine 378. 2 positions are modified to N6-acetyllysine: lysine 399 and lysine 404. The residue at position 406 (threonine 406) is a Phosphothreonine. Residues lysine 428 and lysine 445 each carry the N6-acetyllysine modification. Phosphoserine occurs at positions 459 and 461. Residues lysine 468 and lysine 478 each carry the N6-acetyllysine modification. In terms of domain architecture, RRM 3 spans 487–561 (KTLVLSNLSY…RAIRLELQGP (75 aa)). Lysine 514 is covalently cross-linked (Glycyl lysine isopeptide (Lys-Gly) (interchain with G-Cter in SUMO2); alternate). N6-acetyllysine; alternate is present on lysine 514. Residue lysine 522 is modified to N6-acetyllysine. Serine 564 is subject to Phosphoserine. Position 573 is an N6-acetyllysine (lysine 573). Residues 573-648 (KTLFVKGLSE…NKVTLDWAKP (76 aa)) form the RRM 4 domain. Residue lysine 578 forms a Glycyl lysine isopeptide (Lys-Gly) (interchain with G-Cter in SUMO2); alternate linkage. An N6-acetyllysine; alternate modification is found at lysine 578. Residue serine 581 is modified to Phosphoserine. Residue lysine 590 forms a Glycyl lysine isopeptide (Lys-Gly) (interchain with G-Cter in SUMO1); alternate linkage. Lysine 590 participates in a covalent cross-link: Glycyl lysine isopeptide (Lys-Gly) (interchain with G-Cter in SUMO2); alternate. Phosphoserine is present on residues serine 592 and serine 620. Lysine 625 is covalently cross-linked (Glycyl lysine isopeptide (Lys-Gly) (interchain with G-Cter in SUMO2)). A disordered region spans residues 641–711 (VTLDWAKPKG…KPQGKKTKFE (71 aa)). Lysine 647 is modified (N6-acetyllysine). Residues 651–697 (EGGFGGRGGGRGGFGGRGGGRGGRGGFGGRGRGGFGGRGGFRGGRGG) show a composition bias toward gly residues. Arginine 657, arginine 661, arginine 667, arginine 671, arginine 674, arginine 680, arginine 682, arginine 688, and arginine 692 each carry asymmetric dimethylarginine. Arginine 695 bears the Asymmetric dimethylarginine; alternate mark. Arginine 695 is modified (omega-N-methylarginine; alternate). Positions 698-711 (GGDHKPQGKKTKFE) are enriched in basic and acidic residues.

Identified in a IGF2BP1-dependent mRNP granule complex containing untranslated mRNAs. Component of the SWAP complex that consists of NPM1, NCL/nucleolin, PARP1 and SWAP70. Component of a complex which is at least composed of HTATSF1/Tat-SF1, the P-TEFb complex components CDK9 and CCNT1, RNA polymerase II, SUPT5H, and NCL/nucleolin. Interacts with AICDA. Interacts with APTX. Interacts with C1QBP. Interacts with ERBB4. Interacts (via C-terminus) with FMR1 isoform 6 (via N-terminus). Interacts with GZF1; this interaction is important for nucleolar localization of GZF1. Interacts with NSUN2. Interacts with NVL. Interacts (via N-terminus domain) with SETX. Interacts (via RRM1 and C-terminal RRM4/Arg/Gly-rich domains) with TERT; the interaction is important for nucleolar localization of TERT. Interacts with WDR46. Interacts with ZFP36. Interacts with LRRC34. Interacts with RRP1B. Interacts with HNRNPU; this interaction occurs during mitosis. Interacts with RIOK1; RIOK1 recruits NCL to PRMT5 for symmetrically methylation. Interacts with ZBTB7B. Interacts with MDK; this interaction promotes NCL clustering and lateral movements of this complex into lipid rafts leading to MDK internalization. Interacts with HDGF. Interacts with ALKBH2. Interacts with IGFBP5; this interaction is necessary for IGFBP5 localization to the nucleus. In terms of processing, some glutamate residues are glycylated by TTLL8. This modification occurs exclusively on glutamate residues and results in a glycine chain on the gamma-carboxyl group. Post-translationally, symmetrically methylated by PRMT5.

It localises to the nucleus. The protein localises to the nucleolus. The protein resides in the cytoplasm. Functionally, nucleolin is the major nucleolar protein of growing eukaryotic cells. It is found associated with intranucleolar chromatin and pre-ribosomal particles. It induces chromatin decondensation by binding to histone H1. It is thought to play a role in pre-rRNA transcription and ribosome assembly. May play a role in the process of transcriptional elongation. Binds RNA oligonucleotides with 5'-UUAGGG-3' repeats more tightly than the telomeric single-stranded DNA 5'-TTAGGG-3' repeats. This Macaca fascicularis (Crab-eating macaque) protein is Nucleolin (NCL).